The following is an 890-amino-acid chain: Putative RNA-binding protein 15B (890 aa).

The interval 1-133 (MKRQSERDSS…AEPACPGSSA (133 aa)) is disordered. Positions 10–20 (SPSGRGSSSSA) are enriched in low complexity. Basic and acidic residues-rich tracts occupy residues 22–34 (RPRE…EAGG) and 66–78 (GHRD…DANH). Positions 86-99 (SGSGAGGGGRGGKA) are enriched in gly residues. Residues serine 109 and serine 113 each carry the phosphoserine modification. Pro residues predominate over residues 113-124 (SPLPPPPPPPGA). One can recognise an RRM 1 domain in the interval 139-219 (KTLLISSLSP…RPLKVEPVYL (81 aa)). Residue lysine 213 forms a Glycyl lysine isopeptide (Lys-Gly) (interchain with G-Cter in SUMO2) linkage. Positions 219–253 (LRGGGGSSRRSSSSSAAASTPPPGPPAPADPLGYL) are disordered. The segment covering 226-237 (SRRSSSSSAAAS) has biased composition (low complexity). Residues 238–247 (TPPPGPPAPA) show a composition bias toward pro residues. Phosphoserine occurs at positions 265 and 267. RRM domains are found at residues 337–414 (RNLF…YGKA) and 418–492 (TRLW…FAKA). Threonine 532 bears the Phosphothreonine mark. The tract at residues 547 to 705 (EGDWTSPSKS…KPLEEPKHET (159 aa)) is disordered. Phosphoserine occurs at positions 552, 556, and 562. Composition is skewed to basic and acidic residues over residues 573–616 (RSGE…ERSR) and 626–646 (RGSD…EGTK). Residues 593–597 (RRKRR) carry the Nuclear localization signal motif. Low complexity predominate over residues 647 to 657 (ESSSNSLSNSR). The span at 671–703 (EAADSSHGKKARDSERNHRTTEAEPKPLEEPKH) shows a compositional bias: basic and acidic residues. A Glycyl lysine isopeptide (Lys-Gly) (interchain with G-Cter in SUMO2) cross-link involves residue lysine 702. In terms of domain architecture, SPOC spans 711 to 889 (LSEYAQTLQL…HMVIVIVRDT (179 aa)). Positions 722–890 (WNGLLVLKNS…MVIVIVRDTA (169 aa)) are interaction with Epstein-Barr virus BMLF1.

It belongs to the RRM Spen family. As to quaternary structure, component of the WMM complex, a N6-methyltransferase complex composed of a catalytic subcomplex, named MAC, and of an associated subcomplex, named MACOM. The MAC subcomplex is composed of METTL3 and METTL14. The MACOM subcomplex is composed of WTAP, ZC3H13, CBLL1/HAKAI, VIRMA, and, in some cases of RBM15 (RBM15 or RBM15B). May interact with NCOR2. Interacts with NXF1, the interaction is required to promote mRNA export. In terms of assembly, (Microbial infection) Interacts (via the SPOC domain) with Epstein-Barr virus BMLF1 (via the N-terminus); the interaction is direct. Ubiquitously expressed.

The protein localises to the nucleus. It is found in the nucleoplasm. Its subcellular location is the nucleus speckle. It localises to the nucleus envelope. RNA-binding protein that acts as a key regulator of N6-methyladenosine (m6A) methylation of RNAs, thereby regulating different processes, such as alternative splicing of mRNAs and X chromosome inactivation mediated by Xist RNA. Associated component of the WMM complex, a complex that mediates N6-methyladenosine (m6A) methylation of RNAs, a modification that plays a role in the efficiency of mRNA splicing and RNA processing. Plays a key role in m6A methylation, possibly by binding target RNAs and recruiting the WMM complex. Involved in random X inactivation mediated by Xist RNA: acts by binding Xist RNA and recruiting the WMM complex, which mediates m6A methylation, leading to target YTHDC1 reader on Xist RNA and promoting transcription repression activity of Xist. Functions in the regulation of alternative or illicit splicing, possibly by regulating m6A methylation. Inhibits pre-mRNA splicing. Also functions as a mRNA export factor by acting as a cofactor for the nuclear export receptor NXF1. In Homo sapiens (Human), this protein is Putative RNA-binding protein 15B.